Reading from the N-terminus, the 892-residue chain is Inner centromere protein B (892 aa).

8 disordered regions span residues 50-124, 160-182, 255-286, 305-470, 502-555, 569-687, 702-760, and 797-819; these read AEPE…KRMT, EHER…EMKT, LVNE…SLVV, KRES…PPPH, KRNT…RRED, QLEE…RERE, ERAA…AAAA, and NYGM…KPIP. Residues 60–69 show a composition bias toward basic residues; the sequence is SQKRRRKKRT. Positions 90–99 are enriched in low complexity; it reads SANWSSSVRR. The span at 259–272 shows a compositional bias: polar residues; it reads QPLNLSNESATPTG. Positions 305-315 are enriched in basic and acidic residues; that stretch reads KRESMTREAVR. Over residues 316 to 326 the composition is skewed to basic residues; that stretch reads KSIRQSISKKK. The span at 332 to 343 shows a compositional bias: low complexity; that stretch reads SSTSSQRSCHSS. The segment covering 431 to 444 has biased composition (basic and acidic residues); it reads RAVDELSDDERPSE. The span at 455–470 shows a compositional bias: pro residues; the sequence is PSPPCPPSKIVKPPPH. 4 stretches are compositionally biased toward basic and acidic residues: residues 509–555, 569–602, 609–687, and 702–754; these read PDPK…RRED, QLEE…EEKA, KKQE…RERE, and ERAA…KAKE. The interval 512–725 is SAH; that stretch reads KSEEKERQRL…EERKKREQQQ (214 aa). Positions 802-876 are IN box; the sequence is LNSDDSTDDE…RTSSAVWHSP (75 aa). Phosphoserine is present on residues S869 and S870.

It belongs to the INCENP family. In terms of assembly, component of the CPC at least composed of survivin/birc5, incenp, cdca8/borealin and/or cdca9/dasra-A, and aurkb/aurora-B. Interacts (via C-terminus) with aurkb (via N-terminus and kinase domain). Interacts (via N-terminus) with birc5.1, birc5.2, cdca8 and cdca9. Interacts with mtus1.

Its subcellular location is the nucleus. It is found in the chromosome. It localises to the centromere. The protein localises to the cytoplasm. The protein resides in the cytoskeleton. Its subcellular location is the spindle. It is found in the midbody. It localises to the kinetochore. In terms of biological role, component of the chromosomal passenger complex (CPC), a complex that acts as a key regulator of mitosis. The CPC complex has essential functions at the centromere in ensuring correct chromosome alignment and segregation and is required for chromatin-induced microtubule stabilization and spindle assembly. Acts as a scaffold regulating CPC localization and activity. The C-terminus associates with aurkb/aurora-B, the N-terminus associated with cdca8/borealin and/or cdca9/dasra-A tethers the CPC to the inner centromere, and the microtubule binding activity within the central SAH domain directs aurkb/aurora-B toward substrates near microtubules. Activates aurkb. The protein is Inner centromere protein B (incenp-b) of Xenopus laevis (African clawed frog).